The following is a 547-amino-acid chain: Elongator complex protein 3 (547 aa).

The 291-residue stretch at 82–372 folds into the Radical SAM core domain; it reads RTASGIAVVA…YRVQRDIPMP (291 aa). [4Fe-4S] cluster is bound by residues C99, C109, and C112. Position 161 is a phosphoserine (S161). K164 serves as a coordination point for acetyl-CoA. Residue Y202 is modified to Phosphotyrosine. K229 is subject to N6-methyllysine. Position 251 is a phosphotyrosine (Y251). An N-acetyltransferase domain is found at 396 to 547; the sequence is IQCRDVRTRE…QGPYMVKTLE (152 aa). Acetyl-CoA-binding positions include 474 to 477, 497 to 499, and Y530; these read ELHV and FGM.

Belongs to the ELP3 family. As to quaternary structure, component of the elongator complex which consists of ELP1, ELP2, ELP3, ELP4, ELP5 and ELP6. ELP1, ELP2 and ELP3 form the elongator core complex. Interacts with alpha-tubulin. Requires [4Fe-4S] cluster as cofactor. Tyrosine-phosphorylated; phosphorylation on Tyr-202 does not affect elongator complex integrity or ELP3 protein stability. Also serine/threonine-phosphorylated.

The protein localises to the cytoplasm. It localises to the nucleus. The enzyme catalyses uridine(34) in tRNA + acetyl-CoA + S-adenosyl-L-methionine + H2O = 5-(carboxymethyl)uridine(34) in tRNA + 5'-deoxyadenosine + L-methionine + CoA + 2 H(+). The protein operates within tRNA modification; 5-methoxycarbonylmethyl-2-thiouridine-tRNA biosynthesis. Its function is as follows. Catalytic tRNA acetyltransferase subunit of the elongator complex which is required for multiple tRNA modifications, including mcm5U (5-methoxycarbonylmethyl uridine), mcm5s2U (5-methoxycarbonylmethyl-2-thiouridine), and ncm5U (5-carbamoylmethyl uridine). In the elongator complex, acts as a tRNA uridine(34) acetyltransferase by mediating formation of carboxymethyluridine in the wobble base at position 34 in tRNAs. May also act as a protein lysine acetyltransferase by mediating acetylation of target proteins; such activity is however unclear in vivo and recent evidences suggest that ELP3 primarily acts as a tRNA acetyltransferase. Involved in neurogenesis: regulates the migration and branching of projection neurons in the developing cerebral cortex, through a process depending on alpha-tubulin acetylation. Required for acetylation of GJA1 in the developing cerebral cortex. This Bos taurus (Bovine) protein is Elongator complex protein 3.